A 195-amino-acid polypeptide reads, in one-letter code: GTP-dependent dephospho-CoA kinase (195 aa).

5 residues coordinate GTP: Asp-49, Val-50, Asp-68, Glu-127, and Asp-150.

It belongs to the GTP-dependent DPCK family.

It carries out the reaction 3'-dephospho-CoA + GTP = GDP + CoA + H(+). It participates in cofactor biosynthesis; coenzyme A biosynthesis. Catalyzes the GTP-dependent phosphorylation of the 3'-hydroxyl group of dephosphocoenzyme A to form coenzyme A (CoA). The sequence is that of GTP-dependent dephospho-CoA kinase from Methanosarcina acetivorans (strain ATCC 35395 / DSM 2834 / JCM 12185 / C2A).